Consider the following 945-residue polypeptide: Isoleucine--tRNA ligase (945 aa).

A 'HIGH' region motif is present at residues 66–76 (PYANGDIHLGH). E581 contributes to the L-isoleucyl-5'-AMP binding site. The short motif at 622–626 (KMSKS) is the 'KMSKS' region element. Position 625 (K625) interacts with ATP. Zn(2+)-binding residues include C908, C911, C928, and C931.

This sequence belongs to the class-I aminoacyl-tRNA synthetase family. IleS type 1 subfamily. In terms of assembly, monomer. Zn(2+) is required as a cofactor.

It is found in the cytoplasm. It carries out the reaction tRNA(Ile) + L-isoleucine + ATP = L-isoleucyl-tRNA(Ile) + AMP + diphosphate. In terms of biological role, catalyzes the attachment of isoleucine to tRNA(Ile). As IleRS can inadvertently accommodate and process structurally similar amino acids such as valine, to avoid such errors it has two additional distinct tRNA(Ile)-dependent editing activities. One activity is designated as 'pretransfer' editing and involves the hydrolysis of activated Val-AMP. The other activity is designated 'posttransfer' editing and involves deacylation of mischarged Val-tRNA(Ile). This Burkholderia cenocepacia (strain ATCC BAA-245 / DSM 16553 / LMG 16656 / NCTC 13227 / J2315 / CF5610) (Burkholderia cepacia (strain J2315)) protein is Isoleucine--tRNA ligase.